A 600-amino-acid polypeptide reads, in one-letter code: MAQAWAFLLPVLFFGSYVTNLFLPTYASSPLCSGDGGRSFLCAQAPKDKDPSPASTMYKTAFHFQSAKNWMNDPSGPMYFNGIYHEFYQYNLNGPIFGDIVWGHSVSTDLINWIGLGPALVRDTSSDIDGCWTGSVTILPGGKPVIIYTGGDIDQHQVQNIAFPKNRSDPYLREWIKAANNPVLRPDEPGMNSIEFRDPTTGWIGPDGLWRMAVGGELNGYSAALLYKSEDFLNWTKVDHPLYSHNGSNMWECPDFFAVLPGNNGGLDLSAAIPQGAKHALKMSVDSVDKYLIGVYDLKRDAFVPDNVIDDRRLWLRIDYGTFYASKSFFDSNKGRRIIWGWSRETDSPSDDLEKGWAGLHTIPRRIWLADDGKQLLQWPVDEIEFLRTNEINHQGLELNKGDLFEIKEVDTFQADVEIDFELASIDDADPFDPSWLLDPEKHCGEVGASVPGGIGPFGLVILASDNMEEHTEVYFRVYKLQEKYMVLMCSDLRRSSMRPDLEKPAYGGFFEFDLAKERKISLRTLIDRSAVESFGGGGRVCITSRVYPAVLADVGRAHMYAFNNGSATVRVPQLSAWTMRKAQVNVEKGWSAIQNRGSI.

A signal peptide spans 1–27 (MAQAWAFLLPVLFFGSYVTNLFLPTYA). The active site involves aspartate 73. 3 N-linked (GlcNAc...) asparagine glycosylation sites follow: asparagine 166, asparagine 234, and asparagine 246. An intrachain disulfide couples cysteine 444 to cysteine 490. Residue asparagine 565 is glycosylated (N-linked (GlcNAc...) asparagine).

This sequence belongs to the glycosyl hydrolase 32 family.

The enzyme catalyses Hydrolysis of terminal, non-reducing (2-&gt;1)-linked beta-D-fructofuranose residues in fructans.. Inhibited by sucrose. Its function is as follows. Hydrolyzes inulin-type beta-(2,1)-fructans. May play a role as a beta-(2,1)-trimmer during graminan biosynthesis. The protein is Fructan 1-exohydrolase of Leymus chinensis (Chinese lyme grass).